Consider the following 438-residue polypeptide: 3-phosphoshikimate 1-carboxyvinyltransferase (438 aa).

3-phosphoshikimate is bound by residues lysine 21, serine 22, and arginine 26. Lysine 21 serves as a coordination point for phosphoenolpyruvate. Phosphoenolpyruvate is bound by residues glycine 95 and arginine 123. The 3-phosphoshikimate site is built by serine 167, glutamine 169, aspartate 315, and lysine 342. Glutamine 169 is a binding site for phosphoenolpyruvate. The active-site Proton acceptor is aspartate 315. The phosphoenolpyruvate site is built by arginine 346 and arginine 387.

Belongs to the EPSP synthase family. As to quaternary structure, monomer.

The protein localises to the cytoplasm. The catalysed reaction is 3-phosphoshikimate + phosphoenolpyruvate = 5-O-(1-carboxyvinyl)-3-phosphoshikimate + phosphate. The protein operates within metabolic intermediate biosynthesis; chorismate biosynthesis; chorismate from D-erythrose 4-phosphate and phosphoenolpyruvate: step 6/7. Catalyzes the transfer of the enolpyruvyl moiety of phosphoenolpyruvate (PEP) to the 5-hydroxyl of shikimate-3-phosphate (S3P) to produce enolpyruvyl shikimate-3-phosphate and inorganic phosphate. The sequence is that of 3-phosphoshikimate 1-carboxyvinyltransferase from Coxiella burnetii (strain RSA 331 / Henzerling II).